A 292-amino-acid chain; its full sequence is 2-dehydro-3-deoxygalactonokinase (292 aa).

Belongs to the DgoK family.

It carries out the reaction 2-dehydro-3-deoxy-D-galactonate + ATP = 2-dehydro-3-deoxy-6-phospho-D-galactonate + ADP + H(+). It participates in carbohydrate acid metabolism; D-galactonate degradation; D-glyceraldehyde 3-phosphate and pyruvate from D-galactonate: step 2/3. This chain is 2-dehydro-3-deoxygalactonokinase (dgoK), found in Escherichia coli (strain K12).